Here is a 506-residue protein sequence, read N- to C-terminus: Maturase K (506 aa).

Belongs to the intron maturase 2 family. MatK subfamily.

It localises to the plastid. Its subcellular location is the chloroplast. Usually encoded in the trnK tRNA gene intron. Probably assists in splicing its own and other chloroplast group II introns. This is Maturase K from Crataegus monogyna (Hawthorn).